Here is a 417-residue protein sequence, read N- to C-terminus: MDYFNYQEDGQLWAEQVPLADLANQYGTPLYVYSRATLERHWHAFDKSVGDYPHLICYAVKANSNLGVLNTLARLGSGFDIVSVGELERVLAAGGDPSKVVFSGVGKTEAEMKRALQLKIKCFNVESEPELQRLNKVAGELGVKAPISLRINPDVDAKTHPYISTGLRDNKFGITFDRAAQVYRLAHSLPNLDVHGIDCHIGSQLTALAPFIDATDRLLALIDSLKAEGIHIRHLDVGGGLGVVYRDELPPQPSEYAKALLDRLERHRDLELIFEPGRAIAANAGVLVTKVEFLKHTEHKNFAIIDAAMNDLIRPALYQAWQDIIPLRPRQGEAQTYDLVGPVCETSDFLGKDRDLVLQEGDLLAVRSSGAYGFTMSSNYNTRPRVAEVMVDGNKTYLVRQREELSSLWALESVLPE.

Lys-61 bears the N6-(pyridoxal phosphate)lysine mark. Residues Gly-240 and 275–278 (EPGR) contribute to the pyridoxal 5'-phosphate site. Residues Arg-278, Arg-314, and Tyr-318 each contribute to the substrate site. The Proton donor role is filled by Cys-344. 2 residues coordinate substrate: Glu-345 and Tyr-372. Tyr-372 contacts pyridoxal 5'-phosphate.

The protein belongs to the Orn/Lys/Arg decarboxylase class-II family. LysA subfamily. In terms of assembly, homodimer. It depends on pyridoxal 5'-phosphate as a cofactor.

The enzyme catalyses meso-2,6-diaminopimelate + H(+) = L-lysine + CO2. It participates in amino-acid biosynthesis; L-lysine biosynthesis via DAP pathway; L-lysine from DL-2,6-diaminopimelate: step 1/1. Specifically catalyzes the decarboxylation of meso-diaminopimelate (meso-DAP) to L-lysine. This is Diaminopimelate decarboxylase (lysA) from Vibrio cholerae serotype O1 (strain ATCC 39315 / El Tor Inaba N16961).